We begin with the raw amino-acid sequence, 371 residues long: O-antigen chain mannosyltransferase C (371 aa).

Belongs to the glycosyltransferase group 1 family. Glycosyltransferase 4 subfamily.

It carries out the reaction N-acetyl-alpha-D-glucosaminyl-di-trans,octa-cis-undecaprenyl diphosphate + GDP-alpha-D-mannose = alpha-D-mannosyl-(1-&gt;3)-N-acetyl-alpha-D-glucosaminyl-di-trans,octa-cis-undecaprenyl diphosphate + GDP + H(+). Its pathway is bacterial outer membrane biogenesis; LPS O-antigen biosynthesis. Functionally, mannosyltransferase involved in the biosynthesis of the repeat unit of the lipopolysaccharide (LPS) O-antigen region. Catalyzes the transfer of a single alpha-(1-&gt;3)-linked mannose residue to the acceptor N-acetyl-glucosaminyl-diphospho-undecaprenol during the synthesis of the adapter region. In Escherichia coli, this protein is O-antigen chain mannosyltransferase C.